The chain runs to 933 residues: Phosphoenolpyruvate carboxylase (933 aa).

Residues His164 and Lys595 contribute to the active site.

Belongs to the PEPCase type 1 family. Mg(2+) is required as a cofactor.

It carries out the reaction oxaloacetate + phosphate = phosphoenolpyruvate + hydrogencarbonate. Functionally, forms oxaloacetate, a four-carbon dicarboxylic acid source for the tricarboxylic acid cycle. This Rhodopseudomonas palustris (strain BisB5) protein is Phosphoenolpyruvate carboxylase.